Here is a 564-residue protein sequence, read N- to C-terminus: Proline--tRNA ligase (564 aa).

This sequence belongs to the class-II aminoacyl-tRNA synthetase family. ProS type 1 subfamily. In terms of assembly, homodimer.

Its subcellular location is the cytoplasm. The enzyme catalyses tRNA(Pro) + L-proline + ATP = L-prolyl-tRNA(Pro) + AMP + diphosphate. In terms of biological role, catalyzes the attachment of proline to tRNA(Pro) in a two-step reaction: proline is first activated by ATP to form Pro-AMP and then transferred to the acceptor end of tRNA(Pro). As ProRS can inadvertently accommodate and process non-cognate amino acids such as alanine and cysteine, to avoid such errors it has two additional distinct editing activities against alanine. One activity is designated as 'pretransfer' editing and involves the tRNA(Pro)-independent hydrolysis of activated Ala-AMP. The other activity is designated 'posttransfer' editing and involves deacylation of mischarged Ala-tRNA(Pro). The misacylated Cys-tRNA(Pro) is not edited by ProRS. This Xanthomonas campestris pv. campestris (strain 8004) protein is Proline--tRNA ligase.